Here is an 834-residue protein sequence, read N- to C-terminus: Pentatricopeptide repeat-containing protein At4g39530 (834 aa).

PPR repeat units follow at residues 78 to 112 (DTYL…NLVS), 113 to 144 (WSTM…KDSP), 145 to 181 (NEYI…GFDR), 182 to 212 (DVYV…LPEK), 213 to 247 (STVT…NVVP), 248 to 282 (DGYI…GLEM), 283 to 313 (DASL…MPNK), 314 to 348 (NIIS…GLKP), 349 to 383 (DMYA…NLGN), 384 to 414 (DSYV…FAAA), 415 to 452 (DVVL…LIRP), 453 to 487 (SLLT…GLNL), 488 to 518 (DIFA…MKVK), 519 to 553 (DLVI…RERP), 554 to 588 (DEFT…GLEC), 589 to 619 (NPYI…AASR), 620 to 654 (DVVC…GIEP), 655 to 689 (NYIT…GIEP), and 690 to 720 (ETEH…MPTK). The type E motif stretch occupies residues 725 to 800 (VWRSLLSGCA…EPGRSWIGIN (76 aa)). Positions 801 to 831 (KEVHIFLSKDKSHCKANQIYEVLDDLLVQIR) are type E(+) motif.

It belongs to the PPR family. PCMP-E subfamily.

The chain is Pentatricopeptide repeat-containing protein At4g39530 (PCMP-E52) from Arabidopsis thaliana (Mouse-ear cress).